The chain runs to 467 residues: Asparagine--tRNA ligase (467 aa).

The protein belongs to the class-II aminoacyl-tRNA synthetase family. In terms of assembly, homodimer.

It localises to the cytoplasm. The catalysed reaction is tRNA(Asn) + L-asparagine + ATP = L-asparaginyl-tRNA(Asn) + AMP + diphosphate + H(+). This chain is Asparagine--tRNA ligase, found in Protochlamydia amoebophila (strain UWE25).